The chain runs to 67 residues: uncharacterized protein (67 aa).

The stretch at A17–Q47 forms a coiled coil.

This is an uncharacterized protein from Bacillus subtilis (strain 168).